The primary structure comprises 340 residues: Tetrathionate reductase subunit C (340 aa).

Transmembrane regions (helical) follow at residues 19 to 39 (WLPW…AALF), 57 to 77 (ALLI…ADLH), 94 to 114 (WMPW…LWFL), 128 to 148 (VTKW…IYTG), 164 to 184 (AFPV…MIVA), 195 to 215 (ILWG…MWVS), 236 to 256 (YYAV…SLAL), 266 to 286 (VLLV…LLIQ), and 306 to 326 (TDGW…LIII).

Belongs to the NrfD family. Probably composed of three subunits: TtrA, TtrB and TtrC.

Its subcellular location is the cell inner membrane. In terms of biological role, part of a membrane-bound tetrathionate reductase that catalyzes the reduction of tetrathionate to thiosulfate. TtrC probably anchors TtrA and TtrB to the periplasmic face of the cytoplasmic membrane. May transfer electrons from membrane quinol to TtrB. During mice infection, the ability to use tetrathionate as an electron acceptor is a growth advantage for S.typhimurium over the competing microbiota in the lumen of the inflamed gut. This chain is Tetrathionate reductase subunit C (ttrC), found in Salmonella typhimurium (strain LT2 / SGSC1412 / ATCC 700720).